Reading from the N-terminus, the 479-residue chain is Sulfate adenylyltransferase subunit 1 (479 aa).

The 215-residue stretch at 25–239 (KSLLRFLTCG…EVLETVDIQR (215 aa)) folds into the tr-type G domain. The interval 34–41 (GSVDDGKS) is G1. Residue 34 to 41 (GSVDDGKS) participates in GTP binding. The interval 92–96 (GITID) is G2. A G3 region spans residues 113 to 116 (DTPG). GTP-binding positions include 113–117 (DTPGH) and 168–171 (NKMD). The interval 168–171 (NKMD) is G4. The segment at 206–208 (SAL) is G5.

It belongs to the TRAFAC class translation factor GTPase superfamily. Classic translation factor GTPase family. CysN/NodQ subfamily. Heterodimer composed of CysD, the smaller subunit, and CysN.

The enzyme catalyses sulfate + ATP + H(+) = adenosine 5'-phosphosulfate + diphosphate. It functions in the pathway sulfur metabolism; hydrogen sulfide biosynthesis; sulfite from sulfate: step 1/3. With CysD forms the ATP sulfurylase (ATPS) that catalyzes the adenylation of sulfate producing adenosine 5'-phosphosulfate (APS) and diphosphate, the first enzymatic step in sulfur assimilation pathway. APS synthesis involves the formation of a high-energy phosphoric-sulfuric acid anhydride bond driven by GTP hydrolysis by CysN coupled to ATP hydrolysis by CysD. The sequence is that of Sulfate adenylyltransferase subunit 1 from Salmonella arizonae (strain ATCC BAA-731 / CDC346-86 / RSK2980).